A 146-amino-acid chain; its full sequence is Ferredoxin-type protein FwdE (146 aa).

2 consecutive 4Fe-4S ferredoxin-type domains span residues isoleucine 90–asparagine 115 and phenylalanine 116–glutamate 145. [4Fe-4S] cluster contacts are provided by cysteine 125, cysteine 128, cysteine 131, and cysteine 135.

It depends on [4Fe-4S] cluster as a cofactor.

The polypeptide is Ferredoxin-type protein FwdE (fwdE) (Methanocaldococcus jannaschii (strain ATCC 43067 / DSM 2661 / JAL-1 / JCM 10045 / NBRC 100440) (Methanococcus jannaschii)).